The following is a 148-amino-acid chain: 3-hydroxyacyl-[acyl-carrier-protein] dehydratase FabZ (148 aa).

Residue His-47 is part of the active site.

This sequence belongs to the thioester dehydratase family. FabZ subfamily.

The protein resides in the cytoplasm. The catalysed reaction is a (3R)-hydroxyacyl-[ACP] = a (2E)-enoyl-[ACP] + H2O. Involved in unsaturated fatty acids biosynthesis. Catalyzes the dehydration of short chain beta-hydroxyacyl-ACPs and long chain saturated and unsaturated beta-hydroxyacyl-ACPs. This chain is 3-hydroxyacyl-[acyl-carrier-protein] dehydratase FabZ, found in Hydrogenobaculum sp. (strain Y04AAS1).